Reading from the N-terminus, the 201-residue chain is Dephospho-CoA kinase (201 aa).

The region spanning 3–201 (ILGLTGGIGS…QIDSRVGCKI (199 aa)) is the DPCK domain. Residue 11–16 (GSGKSL) participates in ATP binding.

This sequence belongs to the CoaE family.

It is found in the cytoplasm. The enzyme catalyses 3'-dephospho-CoA + ATP = ADP + CoA + H(+). It participates in cofactor biosynthesis; coenzyme A biosynthesis; CoA from (R)-pantothenate: step 5/5. Catalyzes the phosphorylation of the 3'-hydroxyl group of dephosphocoenzyme A to form coenzyme A. The sequence is that of Dephospho-CoA kinase from Ehrlichia ruminantium (strain Welgevonden).